A 142-amino-acid chain; its full sequence is Protein Turandot X (142 aa).

Positions Met-1 to Ala-22 are cleaved as a signal peptide.

The protein belongs to the Turandot family.

The protein resides in the secreted. In terms of biological role, a humoral factor that may play a role in stress tolerance. This is Protein Turandot X from Drosophila melanogaster (Fruit fly).